A 56-amino-acid polypeptide reads, in one-letter code: Large ribosomal subunit protein eL24 (56 aa).

Positions 6, 9, 32, and 36 each coordinate Zn(2+). The C4-type zinc-finger motif lies at 6–36 (CSFCNTRITPGTGKLYAKKDGTVYYFCSSKC).

Belongs to the eukaryotic ribosomal protein eL24 family. As to quaternary structure, part of the 50S ribosomal subunit. Forms a cluster with proteins L3 and L14. Zn(2+) is required as a cofactor.

Functionally, binds to the 23S rRNA. The sequence is that of Large ribosomal subunit protein eL24 from Methanothrix thermoacetophila (strain DSM 6194 / JCM 14653 / NBRC 101360 / PT) (Methanosaeta thermophila).